Reading from the N-terminus, the 252-residue chain is Redox-sensing transcriptional repressor Rex (252 aa).

The H-T-H motif DNA-binding region spans 26 to 65; it reads LYLRALTALSERSVPTVSSEELAAAAGVNSAKLRKDFSYL. 100–105 provides a ligand contact to NAD(+); that stretch reads GIGNLG. Residues 222-252 form a disordered region; the sequence is EAAAEGAIPAAASKESADKGPDGDVPAVMPA.

Belongs to the transcriptional regulatory Rex family. Homodimer.

It localises to the cytoplasm. Functionally, modulates transcription in response to changes in cellular NADH/NAD(+) redox state. The chain is Redox-sensing transcriptional repressor Rex from Streptomyces avermitilis (strain ATCC 31267 / DSM 46492 / JCM 5070 / NBRC 14893 / NCIMB 12804 / NRRL 8165 / MA-4680).